A 660-amino-acid chain; its full sequence is MAGIESVLQETRVFNPPESFVKQANIAGMDAYRALCAEAEHDYEGFWARLAHEHLLWHKPFSKVLDESNAPFYKWFEDGELNASYNCLERNLENGNADKVAIIFETDDGKVSRTTYRELHARVCRFANGLKALGIKKGDRVVIYMPMSVEGIVAMQACARIGATHSVVFGGFSAKSLQERIVDVGAVALITADEQMRGGKALPLKAIADEALAMEGTDAVKHVIVYRRTNGNVNWVEGRDRAMDEVEAGQPDTCEVTPVSAEHPLFILYTSGSTGKPKGVQHSTGGYLLWALLTMQWTFDLKPDDIFWCTADIGWVTGHSYIAYGPLAAGATQVVFEGVPTYPNAGRFWDMIQRHKVNTFYTAPTAIRSLIKAAEADEKVHPKQYDLSSLRLLGTVGEPINPEAWMWYHTNIGGGRCPIVDTFWQTETGGHMMTPLPGATPLVPGSCTLPLPGIMAAVVDETGHDVPNGQGGILVVKRPWPSMIRTIWGDPERFKKSYFPEELGGKLYLAGDGSIRDKDTGYFTIMGRIDDVLNVSGHRMGTMEIESALVANPIVAEAAVVGRPDDMTGEAICAFVVLKRSRPDGDEAKQIANELRNWVGKEIGPIAKPKDIRFGDNLPKTRSGKIMRRLLRSLAKGEDITQDTSTLENPAILDQLKETR.

CoA-binding positions include 197–200 (RGGK) and threonine 317. Residues 397–399 (GEP), 421–426 (DTFWQT), aspartate 512, and arginine 528 each bind ATP. CoA is bound at residue serine 536. Arginine 539 serves as a coordination point for ATP. The Mg(2+) site is built by valine 550 and valine 555. N6-acetyllysine is present on lysine 625.

Belongs to the ATP-dependent AMP-binding enzyme family. The cofactor is Mg(2+). Acetylated. Deacetylation by the SIR2-homolog deacetylase activates the enzyme.

It carries out the reaction acetate + ATP + CoA = acetyl-CoA + AMP + diphosphate. Catalyzes the conversion of acetate into acetyl-CoA (AcCoA), an essential intermediate at the junction of anabolic and catabolic pathways. AcsA undergoes a two-step reaction. In the first half reaction, AcsA combines acetate with ATP to form acetyl-adenylate (AcAMP) intermediate. In the second half reaction, it can then transfer the acetyl group from AcAMP to the sulfhydryl group of CoA, forming the product AcCoA. The sequence is that of Acetyl-coenzyme A synthetase from Ralstonia pickettii (strain 12J).